We begin with the raw amino-acid sequence, 121 residues long: Large ribosomal subunit protein uL18 (121 aa).

It belongs to the universal ribosomal protein uL18 family. As to quaternary structure, part of the 50S ribosomal subunit; part of the 5S rRNA/L5/L18/L25 subcomplex. Contacts the 5S and 23S rRNAs.

In terms of biological role, this is one of the proteins that bind and probably mediate the attachment of the 5S RNA into the large ribosomal subunit, where it forms part of the central protuberance. In Methylibium petroleiphilum (strain ATCC BAA-1232 / LMG 22953 / PM1), this protein is Large ribosomal subunit protein uL18.